The sequence spans 307 residues: tRNA dimethylallyltransferase 1 (307 aa).

11–18 (GPTASGKT) is an ATP binding site. Residue 13–18 (TASGKT) participates in substrate binding. Interaction with substrate tRNA stretches follow at residues 36 to 39 (DSRQ) and 159 to 163 (QRAIR).

It belongs to the IPP transferase family. Monomer. Requires Mg(2+) as cofactor.

It catalyses the reaction adenosine(37) in tRNA + dimethylallyl diphosphate = N(6)-dimethylallyladenosine(37) in tRNA + diphosphate. Its function is as follows. Catalyzes the transfer of a dimethylallyl group onto the adenine at position 37 in tRNAs that read codons beginning with uridine, leading to the formation of N6-(dimethylallyl)adenosine (i(6)A). This chain is tRNA dimethylallyltransferase 1, found in Parabacteroides distasonis (strain ATCC 8503 / DSM 20701 / CIP 104284 / JCM 5825 / NCTC 11152).